Here is a 328-residue protein sequence, read N- to C-terminus: D-cysteine desulfhydrase (328 aa).

Lys51 carries the post-translational modification N6-(pyridoxal phosphate)lysine.

The protein belongs to the ACC deaminase/D-cysteine desulfhydrase family. In terms of assembly, homodimer. Pyridoxal 5'-phosphate serves as cofactor.

The enzyme catalyses D-cysteine + H2O = hydrogen sulfide + pyruvate + NH4(+) + H(+). Catalyzes the alpha,beta-elimination reaction of D-cysteine and of several D-cysteine derivatives. It could be a defense mechanism against D-cysteine. In Salmonella agona (strain SL483), this protein is D-cysteine desulfhydrase.